The following is a 447-amino-acid chain: tRNA threonylcarbamoyladenosine dehydratase 2 (447 aa).

A run of 3 helical transmembrane segments spans residues 9–29 (LITA…YAWT), 86–106 (NQYV…NSLV), and 294–314 (ILPV…TWIL).

It belongs to the HesA/MoeB/ThiF family.

Its subcellular location is the mitochondrion outer membrane. Functionally, catalyzes the ATP-dependent dehydration of threonylcarbamoyladenosine at position 37 (t(6)A37) to form cyclic t(6)A37 (ct(6)A37) in tRNAs that read codons beginning with adenine. The chain is tRNA threonylcarbamoyladenosine dehydratase 2 (TCD2) from Saccharomyces cerevisiae (strain ATCC 204508 / S288c) (Baker's yeast).